A 119-amino-acid polypeptide reads, in one-letter code: Holo-[acyl-carrier-protein] synthase (119 aa).

2 residues coordinate Mg(2+): Asp-8 and Glu-58.

Belongs to the P-Pant transferase superfamily. AcpS family. Mg(2+) is required as a cofactor.

It localises to the cytoplasm. The enzyme catalyses apo-[ACP] + CoA = holo-[ACP] + adenosine 3',5'-bisphosphate + H(+). Its function is as follows. Transfers the 4'-phosphopantetheine moiety from coenzyme A to a Ser of acyl-carrier-protein. The chain is Holo-[acyl-carrier-protein] synthase from Streptococcus thermophilus (strain ATCC BAA-491 / LMD-9).